The primary structure comprises 357 residues: Peptide chain release factor 1 (357 aa).

Residue glutamine 234 is modified to N5-methylglutamine. Residues 283-313 (SKKQEQRSSNRKQQVGSGDRSERIRTYNFPQ) form a disordered region.

Belongs to the prokaryotic/mitochondrial release factor family. Methylated by PrmC. Methylation increases the termination efficiency of RF1.

It is found in the cytoplasm. Functionally, peptide chain release factor 1 directs the termination of translation in response to the peptide chain termination codons UAG and UAA. This chain is Peptide chain release factor 1 (prfA), found in Borreliella burgdorferi (strain ATCC 35210 / DSM 4680 / CIP 102532 / B31) (Borrelia burgdorferi).